Consider the following 471-residue polypeptide: ATP synthase subunit beta, chloroplastic (471 aa).

ATP is bound at residue 151–158 (GGAGVGKT).

The protein belongs to the ATPase alpha/beta chains family. In terms of assembly, F-type ATPases have 2 components, CF(1) - the catalytic core - and CF(0) - the membrane proton channel. CF(1) has five subunits: alpha(3), beta(3), gamma(1), delta(1), epsilon(1). CF(0) has four main subunits: a(1), b(1), b'(1) and c(9-12).

It is found in the plastid. It localises to the chloroplast thylakoid membrane. It catalyses the reaction ATP + H2O + 4 H(+)(in) = ADP + phosphate + 5 H(+)(out). In terms of biological role, produces ATP from ADP in the presence of a proton gradient across the membrane. The catalytic sites are hosted primarily by the beta subunits. This Rhodomonas salina (Cryptomonas salina) protein is ATP synthase subunit beta, chloroplastic.